Here is a 271-residue protein sequence, read N- to C-terminus: MVLLKEYRVILPVSVDEYQVGQLYSVAEASKNETGGGEGVEVLVNEPYEKDDGEKGQYTHKIYHLQSKVPTFVRMLAPEGALNIHEKAWNAYPYCRTVITNEYMKEDFLIKIETWHKPDLGTQENVHKLEPEAWKHVEAIYIDIADRSQVLSKDYKAEEDPAKFKSIKTGRGPLGPNWKQELVNQKDCPYMCAYKLVTVKFKWWGLQNKVENFIHKQEKRLFTNFHRQLFCWLDKWVDLTMDDIRRMEEETKRQLDEMRQKDPVKGMTADD.

Residues threonine 59, lysine 61, glutamate 86, asparagine 90, threonine 97, and lysine 195 each coordinate a 1,2-diacyl-sn-glycero-3-phospho-(1D-myo-inositol). N6-acetyllysine is present on lysine 216. Basic and acidic residues predominate over residues 251 to 264 (TKRQLDEMRQKDPV). Positions 251–271 (TKRQLDEMRQKDPVKGMTADD) are disordered.

It belongs to the PtdIns transfer protein family. PI transfer class I subfamily. Phosphorylated by PKC in a calcium and phosphatidylserine-dependent manner. Expressed in a wide range of tissues.

The protein resides in the cytoplasm. It is found in the nucleus. The enzyme catalyses a 1,2-diacyl-sn-glycero-3-phosphocholine(in) = a 1,2-diacyl-sn-glycero-3-phosphocholine(out). The catalysed reaction is a 1,2-diacyl-sn-glycero-3-phospho-(1D-myo-inositol)(in) = a 1,2-diacyl-sn-glycero-3-phospho-(1D-myo-inositol)(out). With respect to regulation, phosphatidylinositol transfer activity is inhibited by N-ethylmaleimide. Functionally, catalyzes the transfer of phosphatidylinositol (PI) and phosphatidylcholine (PC) between membranes. Shows a preference for PI and PC containing shorter saturated or monosaturated acyl chains at the sn-1 and sn-2 positions. Preference order for PC is C16:1 &gt; C16:0 &gt; C18:1 &gt; C18:0 &gt; C20:4 and for PI is C16:1 &gt; C16:0 &gt; C18:1 &gt; C18:0 &gt; C20:4 &gt; C20:3. In Rattus norvegicus (Rat), this protein is Phosphatidylinositol transfer protein alpha isoform (Pitpna).